The primary structure comprises 467 residues: UDP-N-acetylmuramate--L-alanine ligase (467 aa).

An ATP-binding site is contributed by 114–120 (GTHGKTT).

Belongs to the MurCDEF family.

Its subcellular location is the cytoplasm. It carries out the reaction UDP-N-acetyl-alpha-D-muramate + L-alanine + ATP = UDP-N-acetyl-alpha-D-muramoyl-L-alanine + ADP + phosphate + H(+). Its pathway is cell wall biogenesis; peptidoglycan biosynthesis. Functionally, cell wall formation. The chain is UDP-N-acetylmuramate--L-alanine ligase from Azorhizobium caulinodans (strain ATCC 43989 / DSM 5975 / JCM 20966 / LMG 6465 / NBRC 14845 / NCIMB 13405 / ORS 571).